Consider the following 360-residue polypeptide: GTPase Obg (360 aa).

Residues 1–156 (MFVDSVEIII…KCVRLELKLI (156 aa)) form the Obg domain. Residues 157–360 (ADIGLVGFPN…LKFVLLKALP (204 aa)) form the OBG-type G domain. Residues 163–170 (GFPNAGKS), 188–192 (FTTLV), 210–213 (DIPG), 279–282 (NKCD), and 341–343 (SAV) each bind GTP. The Mg(2+) site is built by Ser-170 and Thr-190.

The protein belongs to the TRAFAC class OBG-HflX-like GTPase superfamily. OBG GTPase family. As to quaternary structure, monomer. Requires Mg(2+) as cofactor.

It localises to the cytoplasm. Functionally, an essential GTPase which binds GTP, GDP and possibly (p)ppGpp with moderate affinity, with high nucleotide exchange rates and a fairly low GTP hydrolysis rate. Plays a role in control of the cell cycle, stress response, ribosome biogenesis and in those bacteria that undergo differentiation, in morphogenesis control. In Helicobacter pylori (strain G27), this protein is GTPase Obg.